The chain runs to 336 residues: Phenylalanine--tRNA ligase alpha subunit (336 aa).

A Mg(2+)-binding site is contributed by glutamate 255.

The protein belongs to the class-II aminoacyl-tRNA synthetase family. Phe-tRNA synthetase alpha subunit type 1 subfamily. As to quaternary structure, tetramer of two alpha and two beta subunits. It depends on Mg(2+) as a cofactor.

It is found in the cytoplasm. The catalysed reaction is tRNA(Phe) + L-phenylalanine + ATP = L-phenylalanyl-tRNA(Phe) + AMP + diphosphate + H(+). This chain is Phenylalanine--tRNA ligase alpha subunit, found in Gemmatimonas aurantiaca (strain DSM 14586 / JCM 11422 / NBRC 100505 / T-27).